Reading from the N-terminus, the 98-residue chain is NADH-ubiquinone oxidoreductase chain 4L (98 aa).

3 helical membrane-spanning segments follow: residues 1–21 (MMSINLNLIMAFLLALAGVLI), 28–48 (STLLCLEGMMLSLFILMALLI), and 59–79 (APLILLVFSACEAGVGLALLV).

The protein belongs to the complex I subunit 4L family. In terms of assembly, core subunit of respiratory chain NADH dehydrogenase (Complex I) which is composed of 45 different subunits.

Its subcellular location is the mitochondrion inner membrane. The enzyme catalyses a ubiquinone + NADH + 5 H(+)(in) = a ubiquinol + NAD(+) + 4 H(+)(out). Core subunit of the mitochondrial membrane respiratory chain NADH dehydrogenase (Complex I) which catalyzes electron transfer from NADH through the respiratory chain, using ubiquinone as an electron acceptor. Part of the enzyme membrane arm which is embedded in the lipid bilayer and involved in proton translocation. The protein is NADH-ubiquinone oxidoreductase chain 4L (MT-ND4L) of Lagorchestes hirsutus (Rufous hare-wallaby).